The chain runs to 345 residues: Eukaryotic translation initiation factor 3 subunit F (345 aa).

The region spanning 30-166 (VVIQPQALFS…TRAYISAPVG (137 aa)) is the MPN domain. Residues 308-345 (GGESGSTESGQRGGQRGGKGGRGGQQRNQERSGEEVRA) are disordered. The segment covering 318-331 (QRGGQRGGKGGRGG) has biased composition (gly residues). The span at 335 to 345 (NQERSGEEVRA) shows a compositional bias: basic and acidic residues.

This sequence belongs to the eIF-3 subunit F family. Component of the eukaryotic translation initiation factor 3 (eIF-3) complex.

Its subcellular location is the cytoplasm. In terms of biological role, component of the eukaryotic translation initiation factor 3 (eIF-3) complex, which is involved in protein synthesis of a specialized repertoire of mRNAs and, together with other initiation factors, stimulates binding of mRNA and methionyl-tRNAi to the 40S ribosome. The eIF-3 complex specifically targets and initiates translation of a subset of mRNAs involved in cell proliferation. This chain is Eukaryotic translation initiation factor 3 subunit F, found in Aspergillus terreus (strain NIH 2624 / FGSC A1156).